A 98-amino-acid chain; its full sequence is Large ribosomal subunit protein uL23 (98 aa).

The protein belongs to the universal ribosomal protein uL23 family. As to quaternary structure, part of the 50S ribosomal subunit. Contacts protein L29, and trigger factor when it is bound to the ribosome.

One of the early assembly proteins it binds 23S rRNA. One of the proteins that surrounds the polypeptide exit tunnel on the outside of the ribosome. Forms the main docking site for trigger factor binding to the ribosome. The polypeptide is Large ribosomal subunit protein uL23 (Clostridium acetobutylicum (strain ATCC 824 / DSM 792 / JCM 1419 / IAM 19013 / LMG 5710 / NBRC 13948 / NRRL B-527 / VKM B-1787 / 2291 / W)).